The following is a 126-amino-acid chain: Fluoride-specific ion channel FluC (126 aa).

Helical transmembrane passes span 6-26 (FVAV…FSVL), 36-56 (YGTL…VGFF), 69-89 (LAIT…SEVV), and 99-119 (WAAM…ALGL). The Na(+) site is built by Gly76 and Thr79.

It belongs to the fluoride channel Fluc/FEX (TC 1.A.43) family.

Its subcellular location is the cell inner membrane. The enzyme catalyses fluoride(in) = fluoride(out). Its activity is regulated as follows. Na(+) is not transported, but it plays an essential structural role and its presence is essential for fluoride channel function. Functionally, fluoride-specific ion channel. Important for reducing fluoride concentration in the cell, thus reducing its toxicity. The polypeptide is Fluoride-specific ion channel FluC (Cupriavidus taiwanensis (strain DSM 17343 / BCRC 17206 / CCUG 44338 / CIP 107171 / LMG 19424 / R1) (Ralstonia taiwanensis (strain LMG 19424))).